Here is a 320-residue protein sequence, read N- to C-terminus: MPRTDDDSWEITESVGATALGVAAARAAETESENPLISDPFARVFLDAAGDGMWNWFAAPNLPAQIAEAEPDLKPRMQGMVDYMAARTAFFDNFFLAATHAGVRQVVILAAGLDSRAWRLPFEDGTTVYELDQPRVLEFKATTLAEHGARPTCHLVSVPVDLRHDWPAALRQAGFDAHAPSAWSAEGLLPFLPAAAQQLLFERVQTLAAPGSRIAVEAPGPDFIDEAARERQRQTMQRVRDLMADLEPDRDIPDVQDLWYFEEREDVGDWLGRHGWDVTVTPAPELMARYDRRPPHDIEDAIPQTRFVAAQRTERTRPDR.

S-adenosyl-L-methionine-binding positions include aspartate 132 and 161 to 162 (DL). Residues 294 to 320 (PPHDIEDAIPQTRFVAAQRTERTRPDR) are disordered.

Belongs to the UPF0677 family.

In terms of biological role, exhibits S-adenosyl-L-methionine-dependent methyltransferase activity. This chain is Putative S-adenosyl-L-methionine-dependent methyltransferase MAP_4078, found in Mycolicibacterium paratuberculosis (strain ATCC BAA-968 / K-10) (Mycobacterium paratuberculosis).